Reading from the N-terminus, the 60-residue chain is Cytochrome c oxidase subunit 9, mitochondrial (60 aa).

At 1-15 (MSAIAPITGTIRKRI) the chain is on the mitochondrial matrix side. The helical transmembrane segment at 16-38 (LADITIGFAIGGAMASYWWWGFH) threads the bilayer. At 39-57 (KNIINKREAYYAKLAEQKA) the chain is on the mitochondrial intermembrane side. Positions 58–60 (AEN) are cleaved as a propeptide — removed in mature form.

It belongs to the fungal cytochrome c oxidase subunit 7a family. Component of the cytochrome c oxidase (complex IV, CIV), a multisubunit enzyme composed of a catalytic core of 3 subunits and several supernumerary subunits. The complex exists as a monomer or a dimer and forms supercomplexes (SCs) in the inner mitochondrial membrane with ubiquinol-cytochrome c oxidoreductase (cytochrome b-c1 complex, complex III, CIII).

The protein localises to the mitochondrion inner membrane. The protein operates within energy metabolism; oxidative phosphorylation. Its function is as follows. Component of the cytochrome c oxidase, the last enzyme in the mitochondrial electron transport chain which drives oxidative phosphorylation. The respiratory chain contains 3 multisubunit complexes succinate dehydrogenase (complex II, CII), ubiquinol-cytochrome c oxidoreductase (cytochrome b-c1 complex, complex III, CIII) and cytochrome c oxidase (complex IV, CIV), that cooperate to transfer electrons derived from NADH and succinate to molecular oxygen, creating an electrochemical gradient over the inner membrane that drives transmembrane transport and the ATP synthase. Cytochrome c oxidase is the component of the respiratory chain that catalyzes the reduction of oxygen to water. Electrons originating from reduced cytochrome c in the intermembrane space (IMS) are transferred via the dinuclear copper A center (CU(A)) of subunit 2 and heme A of subunit 1 to the active site in subunit 1, a binuclear center (BNC) formed by heme A3 and copper B (CU(B)). The BNC reduces molecular oxygen to 2 water molecules using 4 electrons from cytochrome c in the IMS and 4 protons from the mitochondrial matrix. The polypeptide is Cytochrome c oxidase subunit 9, mitochondrial (COX9) (Kluyveromyces lactis (strain ATCC 8585 / CBS 2359 / DSM 70799 / NBRC 1267 / NRRL Y-1140 / WM37) (Yeast)).